The primary structure comprises 325 residues: MKTEKRYLVPGDYMADPAVHVFDGKLYIYPSHDWESGIAENDNGDHFNMKDYHVYSMDDVMNGEIKDHGVVLSTEDIPWAGRQLWDCDVVCKDGKYYMYFPLKDQNDIFRIGVAVSDKPYGPFIPEANPMKGSYSIDPAVWDDGDGNYYIYFGGLWGGQLQRYRNNKALESAILPEGEEEAIPSRVARLSEDMMEFAEEPRAVVILDEDGKPLTAGDTERRFFEASWMHKYNGKYYFSYSTGDTHLLCYATGDNPYGPFTYQGVILTPVVGWTTHHAIVEFKGKWYLFHHDCVPSEGKTWLRSLKVCELQYDADGRIITIEGKDE.

Residue Asp16 is the Proton acceptor of the active site. Glu224 functions as the Proton donor in the catalytic mechanism.

Belongs to the glycosyl hydrolase 43 family.

It catalyses the reaction Hydrolysis of (1-&gt;4)-beta-D-xylans, to remove successive D-xylose residues from the non-reducing termini.. It carries out the reaction Hydrolysis of terminal non-reducing alpha-L-arabinofuranoside residues in alpha-L-arabinosides.. The protein is Xylosidase/arabinosidase (xsa) of Bacteroides ovatus.